Here is a 278-residue protein sequence, read N- to C-terminus: 3-methyl-2-oxobutanoate hydroxymethyltransferase (278 aa).

Residues Asp-49 and Asp-88 each contribute to the Mg(2+) site. 3-methyl-2-oxobutanoate-binding positions include 49–50 (DS), Asp-88, and Lys-118. Glu-120 lines the Mg(2+) pocket. Glu-186 (proton acceptor) is an active-site residue.

This sequence belongs to the PanB family. Homodecamer; pentamer of dimers. The cofactor is Mg(2+).

It localises to the cytoplasm. The enzyme catalyses 3-methyl-2-oxobutanoate + (6R)-5,10-methylene-5,6,7,8-tetrahydrofolate + H2O = 2-dehydropantoate + (6S)-5,6,7,8-tetrahydrofolate. The protein operates within cofactor biosynthesis; (R)-pantothenate biosynthesis; (R)-pantoate from 3-methyl-2-oxobutanoate: step 1/2. Catalyzes the reversible reaction in which hydroxymethyl group from 5,10-methylenetetrahydrofolate is transferred onto alpha-ketoisovalerate to form ketopantoate. The protein is 3-methyl-2-oxobutanoate hydroxymethyltransferase of Bordetella parapertussis (strain 12822 / ATCC BAA-587 / NCTC 13253).